A 317-amino-acid polypeptide reads, in one-letter code: Tyrosine--tRNA ligase (317 aa).

Tyr33 serves as a coordination point for L-tyrosine. The 'HIGH' region signature appears at Pro38 to His46. Tyr155, Gln159, Asp162, and Gln177 together coordinate L-tyrosine. The short motif at Lys211 to Ser215 is the 'KMSKS' region element. Residue Ser214 participates in ATP binding.

It belongs to the class-I aminoacyl-tRNA synthetase family. TyrS type 3 subfamily. In terms of assembly, homodimer.

The protein localises to the cytoplasm. The enzyme catalyses tRNA(Tyr) + L-tyrosine + ATP = L-tyrosyl-tRNA(Tyr) + AMP + diphosphate + H(+). In terms of biological role, catalyzes the attachment of tyrosine to tRNA(Tyr) in a two-step reaction: tyrosine is first activated by ATP to form Tyr-AMP and then transferred to the acceptor end of tRNA(Tyr). The sequence is that of Tyrosine--tRNA ligase from Methanosarcina mazei (strain ATCC BAA-159 / DSM 3647 / Goe1 / Go1 / JCM 11833 / OCM 88) (Methanosarcina frisia).